The sequence spans 79 residues: MAEAPARRPFFRRRKTCPFSGPNAPKIDYKDSKLLMRYVSERGKIVPSRITAVSAKKQRELARAIKRARFLGLLPYVIR.

It belongs to the bacterial ribosomal protein bS18 family. Part of the 30S ribosomal subunit. Forms a tight heterodimer with protein bS6.

In terms of biological role, binds as a heterodimer with protein bS6 to the central domain of the 16S rRNA, where it helps stabilize the platform of the 30S subunit. The polypeptide is Small ribosomal subunit protein bS18 (Bradyrhizobium sp. (strain BTAi1 / ATCC BAA-1182)).